Reading from the N-terminus, the 126-residue chain is UPF0102 protein BCAN_A0183 (126 aa).

Belongs to the UPF0102 family.

This is UPF0102 protein BCAN_A0183 from Brucella canis (strain ATCC 23365 / NCTC 10854 / RM-666).